The sequence spans 82 residues: Immediate early response 3-interacting protein 1 (82 aa).

2 helical membrane-spanning segments follow: residues 2–22 (AFTL…IAVL) and 62–82 (VMRV…LLFG).

Belongs to the YOS1 family.

The protein resides in the endoplasmic reticulum membrane. Functionally, regulator of endoplasmic reticulum secretion that acts as a key determinant of brain size. Required for secretion of extracellular matrix proteins. Required for correct brain development by depositing sufficient extracellular matrix proteins for tissue integrity and the proliferation of neural progenitors. Acts as a regulator of the unfolded protein response (UPR). This chain is Immediate early response 3-interacting protein 1, found in Mus musculus (Mouse).